The following is a 142-amino-acid chain: Galactose-6-phosphate isomerase subunit LacA 2 (142 aa).

It belongs to the LacAB/RpiB family. As to quaternary structure, heteromultimeric protein consisting of LacA and LacB.

The enzyme catalyses aldehydo-D-galactose 6-phosphate = keto-D-tagatose 6-phosphate. It participates in carbohydrate metabolism; D-galactose 6-phosphate degradation; D-tagatose 6-phosphate from D-galactose 6-phosphate: step 1/1. In Streptococcus pyogenes serotype M3 (strain ATCC BAA-595 / MGAS315), this protein is Galactose-6-phosphate isomerase subunit LacA 2.